We begin with the raw amino-acid sequence, 187 residues long: Hypoxanthine/guanine phosphoribosyltransferase (187 aa).

This sequence belongs to the purine/pyrimidine phosphoribosyltransferase family. Archaeal HPRT subfamily. In terms of assembly, homodimer.

The protein localises to the cytoplasm. It carries out the reaction IMP + diphosphate = hypoxanthine + 5-phospho-alpha-D-ribose 1-diphosphate. It catalyses the reaction GMP + diphosphate = guanine + 5-phospho-alpha-D-ribose 1-diphosphate. Its pathway is purine metabolism; IMP biosynthesis via salvage pathway; IMP from hypoxanthine: step 1/1. Functionally, catalyzes a salvage reaction resulting in the formation of IMP that is energically less costly than de novo synthesis. The polypeptide is Hypoxanthine/guanine phosphoribosyltransferase (Methanococcus voltae (strain ATCC BAA-1334 / A3)).